We begin with the raw amino-acid sequence, 367 residues long: tRNA/tmRNA (uracil-C(5))-methyltransferase (367 aa).

S-adenosyl-L-methionine-binding residues include Gln-189, Tyr-217, Asn-222, Glu-238, and Asp-298. The Nucleophile role is filled by Cys-323. Glu-357 functions as the Proton acceptor in the catalytic mechanism.

It belongs to the class I-like SAM-binding methyltransferase superfamily. RNA M5U methyltransferase family. TrmA subfamily.

The catalysed reaction is uridine(54) in tRNA + S-adenosyl-L-methionine = 5-methyluridine(54) in tRNA + S-adenosyl-L-homocysteine + H(+). It catalyses the reaction uridine(341) in tmRNA + S-adenosyl-L-methionine = 5-methyluridine(341) in tmRNA + S-adenosyl-L-homocysteine + H(+). Its function is as follows. Dual-specificity methyltransferase that catalyzes the formation of 5-methyluridine at position 54 (m5U54) in all tRNAs, and that of position 341 (m5U341) in tmRNA (transfer-mRNA). This is tRNA/tmRNA (uracil-C(5))-methyltransferase from Pseudoalteromonas translucida (strain TAC 125).